Consider the following 956-residue polypeptide: Thrombospondin-3 (956 aa).

A signal peptide spans 1 to 21 (MEKPELWGVLALLLLCSYTCG). The Laminin G-like domain occupies 22-193 (SQDLQVIDLL…VESMKIILGG (172 aa)). 21 disulfide bridges follow: C278–C289, C283–C300, C303–C314, C320–C332, C326–C341, C344–C368, C374–C388, C382–C397, C400–C412, C418–C432, C426–C442, C444–C455, C471–C478, C483–C503, C519–C539, C542–C562, C578–C598, C601–C621, C639–C659, C679–C699, and C715–C936. N-linked (GlcNAc...) asparagine glycosylation is present at N310. One can recognise an EGF-like 1; calcium-binding domain in the interval 316–354 (DINECAHADPCFPGSSCINTMPGFHCEACPPGYKGTRVS). One can recognise an EGF-like 2; calcium-binding domain in the interval 370–410 (DIDECNDGNNGGCDPNSICTNTVGSFKCGPCRLGFLGNQSQ). A glycan (N-linked (GlcNAc...) asparagine) is linked at N407. One can recognise an EGF-like 3 domain in the interval 414-456 (PARTCHSPAHSPCHIHAHCLFERNGAVSCQCNVGWAGNGNVCG). TSP type-3 repeat units lie at residues 457–491 (PDTDIDGYPDQALPCMDNNKHCKQDNCLLTPNSGQ), 492–527 (EDADNDGVGDQCDDDADGDGIKNVEDNCRLFPNKDQ), 528–550 (QNSDTDSFGDACDNCPNVPNNDQ), 551–586 (KDTDGNGEGDACDNDVDGDGIPNGLDNCPKVPNPLQ), 587–609 (TDRDEDGVGDACDSCPEMSNPTQ), 610–647 (TDADSDLVGDVCDTNEDSDGDGHQDTKDNCPQLPNSSQ), 648–687 (LDSDNDGLGDECDGDDDNDGVPDYIPPGPDNCRLVPNPNQ), and 688–723 (KDSDGNGVGDVCEDDFDNDAVVDPLDVCPESAEVTL). Disordered regions lie at residues 518 to 537 (NCRLFPNKDQQNSDTDSFGD) and 546 to 699 (PNND…GDVC). Residues 555–568 (GNGEGDACDNDVDG) show a composition bias toward acidic residues. Over residues 612 to 628 (ADSDLVGDVCDTNEDSD) the composition is skewed to acidic residues. A glycan (N-linked (GlcNAc...) asparagine) is linked at N644. The span at 650-667 (SDNDGLGDECDGDDDNDG) shows a compositional bias: acidic residues. The region spanning 727 to 941 (RAYQTVILDP…LQYRCNDTVP (215 aa)) is the TSP C-terminal domain. N-linked (GlcNAc...) asparagine glycosylation is present at N937.

It belongs to the thrombospondin family. In terms of assembly, oligomer; disulfide-linked. As to expression, brain, lung and cartilage.

Adhesive glycoprotein that mediates cell-to-cell and cell-to-matrix interactions. Can bind to fibrinogen, fibronectin, laminin and type V collagen. This Mus musculus (Mouse) protein is Thrombospondin-3 (Thbs3).